Consider the following 82-residue polypeptide: Small ribosomal subunit protein uS17 (82 aa).

The protein belongs to the universal ribosomal protein uS17 family. In terms of assembly, part of the 30S ribosomal subunit.

Its function is as follows. One of the primary rRNA binding proteins, it binds specifically to the 5'-end of 16S ribosomal RNA. This chain is Small ribosomal subunit protein uS17, found in Shewanella woodyi (strain ATCC 51908 / MS32).